The chain runs to 201 residues: Large ribosomal subunit protein uL18 (201 aa).

This sequence belongs to the universal ribosomal protein uL18 family. Part of the 50S ribosomal subunit. Contacts the 5S and 23S rRNAs.

Functionally, this is one of the proteins that bind and probably mediate the attachment of the 5S RNA into the large ribosomal subunit, where it forms part of the central protuberance. This is Large ribosomal subunit protein uL18 from Thermococcus onnurineus (strain NA1).